A 466-amino-acid chain; its full sequence is MTQRVRTRFAPSPTGFIHLGNIRSALYPWAFARRMKGDFILRIEDTDVERSSQEAVDVILESMAWLEMDIDEGPFYQMQRMDRYREVVAQMVESGLAYRCYMSTEELDALREAQRERGEKPRYNGFWRPEPGKVLPEPPAGVDPVIRFKNPIGGSVVWDDAVKGRIEISNDELDDLVIARPDGTPTYNFCVVVDDLDMKITHVIRGDDHVNNTPRQINIIRALGGTPPVYAHLPTVLNEQGEKMSKRHGAMAVTGYRDEGYLPEAVLNYLARLGWAHGDAEIFSREQFVEWFDLEHLGKSPAQYNPEKLAWLNNHYIKVGDNQRLATLTQPFIEALGGKVEGADLAGVVALVKDRANTLKEVAQAALLFYRGEPQADAALKAEHLTPEIQPALAALANQLAALPEWKREAISATFKAVLAEFGLKMPKLAMPVRLLVAGQLQTPGIDAVLELFGRDTVLRRLAAAA.

The 'HIGH' region motif lies at 11–21; sequence PSPTGFIHLGN. Residues 243–247 carry the 'KMSKS' region motif; it reads KMSKR. K246 contributes to the ATP binding site.

Belongs to the class-I aminoacyl-tRNA synthetase family. Glutamate--tRNA ligase type 1 subfamily. In terms of assembly, monomer.

It is found in the cytoplasm. It carries out the reaction tRNA(Glu) + L-glutamate + ATP = L-glutamyl-tRNA(Glu) + AMP + diphosphate. Catalyzes the attachment of glutamate to tRNA(Glu) in a two-step reaction: glutamate is first activated by ATP to form Glu-AMP and then transferred to the acceptor end of tRNA(Glu). The chain is Glutamate--tRNA ligase from Cupriavidus necator (strain ATCC 17699 / DSM 428 / KCTC 22496 / NCIMB 10442 / H16 / Stanier 337) (Ralstonia eutropha).